Here is a 419-residue protein sequence, read N- to C-terminus: Synaptotagmin-1 (419 aa).

The Vesicular portion of the chain corresponds to 1 to 58; sequence MVSESHHEALAAPPVTTVATVLPSNATEPASPGEGKEDAFSKLKEKFMNELHKIPLPP. Residue asparagine 25 is glycosylated (N-linked (GlcNAc...) asparagine). The helical transmembrane segment at 59–80 threads the bilayer; it reads WALIAIAIVAVLLVLTCCFCIC. Residues cysteine 75, cysteine 76, cysteine 78, cysteine 80, and cysteine 83 are each lipidated (S-palmitoyl cysteine). Topologically, residues 81–419 are cytoplasmic; it reads KKCLFKKKNK…EVDAMLAVKK (339 aa). The segment at 108-139 is disordered; the sequence is KDLGKTMKDQDDDAETGLTDGEEKEEPKEEEK. Positions 117–131 are enriched in acidic residues; sequence QDDDAETGLTDGEEK. At threonine 126 the chain carries Phosphothreonine. Residues 133 to 379 form a phospholipid binding region; the sequence is EPKEEEKLGK…AIGKVFVGYN (247 aa). The C2 1 domain occupies 139–258; it reads KLGKLQYSLD…DFGHVTEEWR (120 aa). Residues leucine 169, aspartate 170, and aspartate 176 each coordinate Ca(2+). The residue at position 227 (tyrosine 227) is a Phosphotyrosine. Aspartate 228, phenylalanine 229, aspartate 230, serine 233, lysine 234, and aspartate 236 together coordinate Ca(2+). Serine 262 bears the Phosphoserine mark. The C2 2 domain maps to 270-403; the sequence is KLGDICFSLR…NPRRPIAQWH (134 aa). Ca(2+)-binding residues include aspartate 301 and aspartate 307. A phosphoserine mark is found at serine 340 and serine 342. Ca(2+) is bound by residues aspartate 361, aspartate 363, and aspartate 369.

It belongs to the synaptotagmin family. Homotetramer. Heterodimer; heterodimerizes with SYT2 in presence of calcium. Interacts with SCAMP5. Interacts with STON2. Forms a complex with SV2B, syntaxin 1 and SNAP25. Interacts with SV2A, SV2B and SV2C. Interacts with RIMS1. Interacts with PRRT2. Interacts with DNAJC5 in a phosphorylation-dependent manner. Interacts (via N-terminus) with RAB3A. Interacts with SYT12. Interacts with calmodulin. Interacts with DNM1 (via C-terminal proline-rich domain (PRD)); this interaction facilitates vesicle fission during clathrin-mediated endocytosis (CME). Ca(2+) serves as cofactor. Glycosylated.

Its subcellular location is the cytoplasmic vesicle. It is found in the secretory vesicle membrane. It localises to the secretory vesicle. The protein localises to the synaptic vesicle membrane. The protein resides in the chromaffin granule membrane. Its subcellular location is the cytoplasm. In terms of biological role, calcium sensor that participates in triggering neurotransmitter release at the synapse. May have a regulatory role in the membrane interactions during trafficking of synaptic vesicles at the active zone of the synapse. It binds acidic phospholipids with a specificity that requires the presence of both an acidic head group and a diacyl backbone. A Ca(2+)-dependent interaction between synaptotagmin and putative receptors for activated protein kinase C has also been reported. It can bind to at least three additional proteins in a Ca(2+)-independent manner; these are neurexins, syntaxin and AP2. Plays a role in dendrite formation by melanocytes. The protein is Synaptotagmin-1 of Pongo abelii (Sumatran orangutan).